Consider the following 201-residue polypeptide: Recombination protein RecR (201 aa).

The C4-type zinc finger occupies 57-72 (CADCRTFTEQEVCNIC). In terms of domain architecture, Toprim spans 81–176 (GQICVVESPA…EASRIAHGVP (96 aa)).

This sequence belongs to the RecR family.

Functionally, may play a role in DNA repair. It seems to be involved in an RecBC-independent recombinational process of DNA repair. It may act with RecF and RecO. The sequence is that of Recombination protein RecR from Escherichia coli O17:K52:H18 (strain UMN026 / ExPEC).